A 195-amino-acid chain; its full sequence is MNLIPTVIETTNRGERAYDIYSRLLKDRIIMLGSQIDDNVANSIVSQLLFLQAQDSEKDIYLYINSPGGSVTAGFAIYDTIQHIKPDVQTICIGMAASMGSFLLAAGAKGKRFALPNAEVMIHQPLGGAQGQATEIEIAANHILKTREKLNRILSERTGQSIEKIQKDTDRDNFLTAEEAKEYGLIDEVMVPETK.

S98 acts as the Nucleophile in catalysis. H123 is an active-site residue.

The protein belongs to the peptidase S14 family. Fourteen ClpP subunits assemble into 2 heptameric rings which stack back to back to give a disk-like structure with a central cavity, resembling the structure of eukaryotic proteasomes.

It localises to the cytoplasm. It catalyses the reaction Hydrolysis of proteins to small peptides in the presence of ATP and magnesium. alpha-casein is the usual test substrate. In the absence of ATP, only oligopeptides shorter than five residues are hydrolyzed (such as succinyl-Leu-Tyr-|-NHMec, and Leu-Tyr-Leu-|-Tyr-Trp, in which cleavage of the -Tyr-|-Leu- and -Tyr-|-Trp bonds also occurs).. In terms of biological role, cleaves peptides in various proteins in a process that requires ATP hydrolysis. Has a chymotrypsin-like activity. Plays a major role in the degradation of misfolded proteins. The protein is ATP-dependent Clp protease proteolytic subunit of Staphylococcus aureus (strain Mu3 / ATCC 700698).